Reading from the N-terminus, the 1017-residue chain is NLR family CARD domain-containing protein 4 (1017 aa).

The 88-residue stretch at 1-88 (MNFIKENSQV…PLFQELHGLS (88 aa)) folds into the CARD domain. Residues 95–298 (EEDLDDLAQE…QFGALIAEVG (204 aa)) form a nucleotide-binding domain (NBD) region. The region spanning 163 to 476 (SPCIIEGESG…VTKGNGHLQK (314 aa)) is the NACHT domain. ATP is bound at residue 169–176 (GESGKGKS). Positions 356–463 (SHTQTTLFCT…RLSSLLTSGE (108 aa)) are winged-helix domain (WHD). The residue at position 533 (Ser533) is a Phosphoserine. 12 LRR repeats span residues 578–598 (FFRGKSLYINSENIPDYLFDF), 649–672 (KQEFKTLDVTLRDFCKLSKKDIKY), 728–751 (VTNLQTLGVHDLQIQRLPGGLTDN), 755–778 (LKNLMKLILDNIQMNEEDALKLAE), 780–805 (LTNLKKMCLLRLTHLSDIGEGMDYIV), 817–840 (EIQLVSCCLSGNAVKTLAQNLHNL), 841–863 (ARLSILDLSENHLEKDGKEALQQ), 871–895 (LEQLTVLMLPWCGDVRVSLARLLEQ), 904–926 (KLGLKNWRLTDAEIRILGVFFEK), 929–956 (LENFQQLDLAGNCVSSDGWLAFMSGFEN), 958–978 (KELVFFDFSTKGLLPDASLVR), and 992–1014 (EVQLVGWQLDDDDVSVLKGAFKL).

As to quaternary structure, homooligomer; homooligomerizes following activation of Naip proteins by pathogenic proteins such as S.typhimurium (Salmonella) flagellin or PrgJ. Component of the NLRC4 inflammasome, at least composed of NLRC4, caspase-1 (CASP1) and some NAIP family member. Interacts with EIF2AK2/PKR. Phosphorylated at Ser-533 following infection of macrophages with S.typhimurium (Salmonella). Phosphorylation is essential for NLRC4 inflammasome function to promote caspase-1 activation and pyroptosis. PRKCD phosphorylates Ser-533 in vitro.

It is found in the cytoplasm. Its subcellular location is the cytosol. Its function is as follows. Key component of inflammasomes that indirectly senses specific proteins from pathogenic bacteria and fungi and responds by assembling an inflammasome complex that promotes caspase-1 activation, cytokine production and macrophage pyroptosis. The NLRC4 inflammasome is activated as part of the innate immune response to a range of intracellular bacteria. The polypeptide is NLR family CARD domain-containing protein 4 (NLRC4) (Bos taurus (Bovine)).